Consider the following 180-residue polypeptide: uncharacterized protein (180 aa).

A disordered region spans residues 138–180 (SVMPVPMPQQNSDNGSTPHIVDSSKSKDKSSNDGDNGVFTGDE). Positions 145–154 (PQQNSDNGST) are enriched in polar residues. Over residues 159–169 (DSSKSKDKSSN) the composition is skewed to basic and acidic residues.

This is an uncharacterized protein from Acidianus filamentous virus 2 (isolate Italy/Pozzuoli) (AFV-2).